The sequence spans 212 residues: ATP-dependent dethiobiotin synthetase BioD (212 aa).

12 to 17 (DCGKTF) contributes to the ATP binding site. Thr-16 contacts Mg(2+). The active site involves Lys-33. Ser-37 lines the substrate pocket. ATP contacts are provided by residues Asp-50, 110–113 (EGAG), and 170–171 (NC). The Mg(2+) site is built by Asp-50 and Glu-110.

Belongs to the dethiobiotin synthetase family. In terms of assembly, homodimer. Mg(2+) serves as cofactor.

It is found in the cytoplasm. The enzyme catalyses (7R,8S)-7,8-diammoniononanoate + CO2 + ATP = (4R,5S)-dethiobiotin + ADP + phosphate + 3 H(+). It participates in cofactor biosynthesis; biotin biosynthesis; biotin from 7,8-diaminononanoate: step 1/2. Its function is as follows. Catalyzes a mechanistically unusual reaction, the ATP-dependent insertion of CO2 between the N7 and N8 nitrogen atoms of 7,8-diaminopelargonic acid (DAPA, also called 7,8-diammoniononanoate) to form a ureido ring. This Legionella pneumophila (strain Paris) protein is ATP-dependent dethiobiotin synthetase BioD.